Here is a 765-residue protein sequence, read N- to C-terminus: Palmitoyltransferase ZDHHC8 (765 aa).

Over 1–13 (MPRSPGTRLKPAK) the chain is Cytoplasmic. The chain crosses the membrane as a helical span at residues 14-34 (YIPVATAAALLVGSSTLFFVF). At 35–52 (TCPWLTRAVSPAVPVYNG) the chain is on the lumenal side. Residues 53-73 (IIFLFVLANFSMATFMDPGVF) form a helical membrane-spanning segment. Residues 74-148 (PRADEDEDKE…NCIGRRNYRY (75 aa)) lie on the Cytoplasmic side of the membrane. One can recognise a DHHC domain in the interval 104 to 154 (KWCATCHFYRPPRCSHCSVCDNCVEDFDHHCPWVNNCIGRRNYRYFFLFLL). Catalysis depends on C134, which acts as the S-palmitoyl cysteine intermediate. A helical transmembrane segment spans residues 149–169 (FFLFLLSLSAHMVGVVAFGLV). The Lumenal segment spans residues 170–190 (YVLNHAEGLGAAHTTITMAVM). The helical transmembrane segment at 191 to 211 (CVAGLFFIPVIGLTGFHVVLV) threads the bilayer. Topologically, residues 212-765 (TRGRTTNEHV…VGGTTYEISV (554 aa)) are cytoplasmic. The disordered stretch occupies residues 290–386 (LKAGLGRSKS…PGPDSLTLGE (97 aa)). The segment covering 301 to 311 (GSLDRLDEKPL) has biased composition (basic and acidic residues). A compositionally biased stretch (polar residues) spans 333–348 (PRPSSAESALSAQRTS). Residue S337 is modified to Phosphoserine. Residue R441 is modified to Omega-N-methylarginine. A disordered region spans residues 447–542 (ALQPLRSEGG…PREPSPVRYD (96 aa)). Residues S606 and S627 each carry the phosphoserine modification. The interval 630–747 (SLSSAVSRAP…PGPSASPARH (118 aa)) is disordered. Over residues 639-655 (PRTSSSSLQADLANNNA) the composition is skewed to polar residues. Positions 671-680 (QGPPSPPSTP) are enriched in pro residues. S675, S682, S725, and S743 each carry phosphoserine.

This sequence belongs to the DHHC palmitoyltransferase family. ERF2/ZDHHC9 subfamily.

The protein localises to the golgi apparatus membrane. The protein resides in the mitochondrion membrane. The enzyme catalyses L-cysteinyl-[protein] + hexadecanoyl-CoA = S-hexadecanoyl-L-cysteinyl-[protein] + CoA. Functionally, palmitoyltransferase that catalyzes the addition of palmitate onto various protein substrates and therefore functions in several unrelated biological processes. Through the palmitoylation of ABCA1 regulates the localization of the transporter to the plasma membrane and thereby regulates its function in cholesterol and phospholipid efflux. Could also pamitoylate the D(2) dopamine receptor DRD2 and regulate its stability and localization to the plasma membrane. Could also play a role in glutamatergic transmission. The polypeptide is Palmitoyltransferase ZDHHC8 (Canis lupus familiaris (Dog)).